The chain runs to 334 residues: Dual specificity mitogen-activated protein kinase kinase 6 (334 aa).

Positions 1–11 (MSQSKGKKRNP) are enriched in basic residues. Residues 1–34 (MSQSKGKKRNPGLKIPKEAFEQPQTSSTPPRDLD) are disordered. The interval 4–19 (SKGKKRNPGLKIPKEA) is d domain. In terms of domain architecture, Protein kinase spans 53–314 (LEPIVELGRG…YPELMQHPFF (262 aa)). Residues 59–67 (LGRGAYGVV) and lysine 82 contribute to the ATP site. Aspartate 179 acts as the Proton acceptor in catalysis. The residue at position 207 (serine 207) is a Phosphoserine; by MAPK3. At threonine 211 the chain carries Phosphothreonine; by MAPK3. The segment at 311-334 (HPFFTVHESKAADVASFVKLILGD) is DVD domain.

It belongs to the protein kinase superfamily. STE Ser/Thr protein kinase family. MAP kinase kinase subfamily. In terms of assembly, dimer. Interacts (via its D domain) with its substrates MAPK11, MAPK12, MAPK13 and MAPK14. Interacts (via its DVD domain) with MAP3Ks activators like MAP3K5/ASK1, MAP3K1/MEKK1, MAP3K2/MEKK2, MAP3K3/MEKK3, MAP3K4/MEKK4, MAP3K7/TAK1, MAP3K11/MLK3 and MAP3K17/TAOK2. Interacts with DCTN1. Interacts with EIF2AK2/PKR. In terms of processing, weakly autophosphorylated. Phosphorylated at Ser-207 and Thr-211 by the majority of M3Ks, such as MAP3K5/ASK1, MAP3K1/MEKK1, MAP3K2/MEKK2, MAP3K3/MEKK3, MAP3K4/MEKK4, MAP3K7/TAK1, MAP3K11/MLK3 and MAP3K17/TAOK2. In response to genotoxic stress, MAP3K-phosphorylated MAP2K6 is ubiquitinated and degraded by the SCF(FBXO31) complex.

Its subcellular location is the nucleus. The protein resides in the cytoplasm. It localises to the cytoskeleton. It carries out the reaction L-seryl-[protein] + ATP = O-phospho-L-seryl-[protein] + ADP + H(+). The enzyme catalyses L-threonyl-[protein] + ATP = O-phospho-L-threonyl-[protein] + ADP + H(+). The catalysed reaction is L-tyrosyl-[protein] + ATP = O-phospho-L-tyrosyl-[protein] + ADP + H(+). Its activity is regulated as follows. Activated by dual phosphorylation on Ser-207 and Thr-211 in response to a variety of cellular stresses, including UV radiation, osmotic shock, hypoxia, inflammatory cytokines, interferon gamma (IFNG), and less often by growth factors. MAP2K6/MKK6 is activated by the majority of M3Ks, such as MAP3K5/ASK1, MAP3K1/MEKK1, MAP3K2/MEKK2, MAP3K3/MEKK3, MAP3K4/MEKK4, MAP3K7/TAK1, MAP3K11/MLK3 and MAP3K17/TAOK2. In terms of biological role, dual specificity protein kinase which acts as an essential component of the MAP kinase signal transduction pathway. With MAP3K3/MKK3, catalyzes the concomitant phosphorylation of a threonine and a tyrosine residue in the MAP kinases p38 MAPK11, MAPK12, MAPK13 and MAPK14 and plays an important role in the regulation of cellular responses to cytokines and all kinds of stresses. Especially, MAP2K3/MKK3 and MAP2K6/MKK6 are both essential for the activation of MAPK11 and MAPK13 induced by environmental stress, whereas MAP2K6/MKK6 is the major MAPK11 activator in response to TNF. MAP2K6/MKK6 also phosphorylates and activates PAK6. The p38 MAP kinase signal transduction pathway leads to direct activation of transcription factors. Nuclear targets of p38 MAP kinase include the transcription factors ATF2 and ELK1. Within the p38 MAPK signal transduction pathway, MAP3K6/MKK6 mediates phosphorylation of STAT4 through MAPK14 activation, and is therefore required for STAT4 activation and STAT4-regulated gene expression in response to IL-12 stimulation. The pathway is also crucial for IL-6-induced SOCS3 expression and down-regulation of IL-6-mediated gene induction; and for IFNG-dependent gene transcription. Has a role in osteoclast differentiation through NF-kappa-B transactivation by TNFSF11, and in endochondral ossification and since SOX9 is another likely downstream target of the p38 MAPK pathway. MAP2K6/MKK6 mediates apoptotic cell death in thymocytes. Acts also as a regulator for melanocytes dendricity, through the modulation of Rho family GTPases. The chain is Dual specificity mitogen-activated protein kinase kinase 6 (Map2k6) from Mus musculus (Mouse).